The following is a 3856-amino-acid chain: Serine/threonine-protein kinase ATM (3856 aa).

Residues 108–162 (VGNLVWVMTKYKKWWPGEVVDFKADAKESFMVRSIGQSHLVSWFASSKLKPFKES) form the PWWP domain. The segment at 648-681 (GIPDLNGTNTEPTLVLPQVEPTQRRRRRKKEESP) is disordered. Positions 2727-3393 (VVAGSAVVCG…ILQLLALANG (667 aa)) constitute an FAT domain. The Bipartite nuclear localization signal motif lies at 3233–3249 (RKHKTKELEVFIKRFKS). The PI3K/PI4K catalytic domain occupies 3499–3811 (LSDSVTVMNG…GNKDATRALM (313 aa)). Positions 3505 to 3511 (VMNGINA) are G-loop. The tract at residues 3678–3686 (GLGDRHAMN) is catalytic loop. An activation loop region spans residues 3698-3722 (HIDLGVAFEQGLMLKTPERVPFRLT). One can recognise an FATC domain in the interval 3824-3856 (EMRSIHGQAQQLIQDAIDTDRLSHMFPGWGAWM).

The protein belongs to the PI3/PI4-kinase family. Interacts with RUG3. Ubiquitously expressed at low levels with slightly higher levels in flower buds.

The protein resides in the nucleus. It carries out the reaction L-seryl-[protein] + ATP = O-phospho-L-seryl-[protein] + ADP + H(+). The enzyme catalyses L-threonyl-[protein] + ATP = O-phospho-L-threonyl-[protein] + ADP + H(+). Its function is as follows. Serine/threonine protein kinase which activates checkpoint signaling upon genotoxic stresses such as ionizing radiation (IR) or DNA replication stalling. Plays a central role in the perception and response to both stress-induced damage in somatic cells and developmentally programmed DNA damage during meiosis. Recognizes the substrate consensus sequence [ST]-Q. Phosphorylates histone variant H2AX to form H2AXS139ph at double strand breaks (DSBs), thereby regulating DNA damage response mechanism. Involved in transcriptional regulation of RAD51, PARP1, GR1, and LIG4 in response to DNA double strand breaks. Plays a dual role by activating the DNA damage response at dysfunctional telomeres and yet preventing this activation at functional telomeres. Not required for telomere length homeostasis. Regulates DNA damage response (DDR) synergistically with RUG3. Together with RUG3, involved in the splicing of the ND2/NAD2 mRNA. The polypeptide is Serine/threonine-protein kinase ATM (Arabidopsis thaliana (Mouse-ear cress)).